A 264-amino-acid chain; its full sequence is Undecaprenyl-diphosphatase (264 aa).

Transmembrane regions (helical) follow at residues 7–27, 39–59, 89–109, 112–132, 145–165, 182–202, 212–232, and 244–264; these read VVIL…SSGH, LPIV…MIYY, ILLI…IEMF, LFTL…LFLL, ILLA…PGIS, SESF…SLLL, MLFS…VGLF, and SKLY…YFLF.

Belongs to the UppP family.

It is found in the cell inner membrane. The catalysed reaction is di-trans,octa-cis-undecaprenyl diphosphate + H2O = di-trans,octa-cis-undecaprenyl phosphate + phosphate + H(+). Functionally, catalyzes the dephosphorylation of undecaprenyl diphosphate (UPP). Confers resistance to bacitracin. The sequence is that of Undecaprenyl-diphosphatase from Borrelia hermsii (strain HS1 / DAH).